The chain runs to 767 residues: Photosystem I P700 chlorophyll a apoprotein A1 (767 aa).

Transmembrane regions (helical) follow at residues 72–95, 158–181, 197–221, 305–323, 364–387, 403–429, 451–473, and 548–566; these read IFSA…FHGA, LMAL…FHYH, LNHH…HVSL, IAHH…GHMY, WHAQ…QHMY, IGLF…IAMV, AIIS…LYIH, and FMVH…LILL. Residues cysteine 590 and cysteine 599 each coordinate [4Fe-4S] cluster. Helical transmembrane passes span 606-627 and 681-703; these read HVFL…HFSW and TSAY…MFLF. Residue histidine 692 participates in chlorophyll a' binding. The chlorophyll a site is built by methionine 700 and tyrosine 708. Tryptophan 709 serves as a coordination point for phylloquinone. A helical membrane pass occupies residues 741 to 761; it reads AVGVAHYLLGGIATTWAFFHA.

This sequence belongs to the PsaA/PsaB family. As to quaternary structure, the PsaA/B heterodimer binds the P700 chlorophyll special pair and subsequent electron acceptors. PSI consists of a core antenna complex that captures photons, and an electron transfer chain that converts photonic excitation into a charge separation. The cyanobacterial PSI reaction center is composed of one copy each of PsaA,B,C,D,E,F,I,J,K,L,M and X, and forms trimeric complexes. PSI electron transfer chain: 5 chlorophyll a, 1 chlorophyll a', 2 phylloquinones and 3 4Fe-4S clusters. PSI core antenna: 90 chlorophyll a, 22 carotenoids, 3 phospholipids and 1 galactolipid. P700 is a chlorophyll a/chlorophyll a' dimer, A0 is one or more chlorophyll a, A1 is one or both phylloquinones and FX is a shared 4Fe-4S iron-sulfur center. is required as a cofactor.

It localises to the cellular thylakoid membrane. It catalyses the reaction reduced [plastocyanin] + hnu + oxidized [2Fe-2S]-[ferredoxin] = oxidized [plastocyanin] + reduced [2Fe-2S]-[ferredoxin]. PsaA and PsaB bind P700, the primary electron donor of photosystem I (PSI), as well as the electron acceptors A0, A1 and FX. PSI is a plastocyanin/cytochrome c6-ferredoxin oxidoreductase, converting photonic excitation into a charge separation, which transfers an electron from the donor P700 chlorophyll pair to the spectroscopically characterized acceptors A0, A1, FX, FA and FB in turn. Oxidized P700 is reduced on the lumenal side of the thylakoid membrane by plastocyanin or cytochrome c6. The sequence is that of Photosystem I P700 chlorophyll a apoprotein A1 from Synechococcus sp. (strain CC9902).